Reading from the N-terminus, the 162-residue chain is Sorting nexin-12 (162 aa).

The interval 1–20 (MSDTAVADTRRLNSKPQDLT) is disordered. S2 is subject to N-acetylserine. Residue Y23 is modified to Phosphotyrosine. One can recognise a PX domain in the interval 28–152 (NFLEIDIFNP…HMFLQEEAID (125 aa)). 4 residues coordinate a 1,2-diacyl-sn-glycero-3-phospho-(1D-myo-inositol-3-phosphate): R71, S73, K96, and R119. At S73 the chain carries Phosphoserine.

The protein belongs to the sorting nexin family.

It localises to the membrane. Its function is as follows. May be involved in several stages of intracellular trafficking. This chain is Sorting nexin-12 (SNX12), found in Homo sapiens (Human).